A 232-amino-acid polypeptide reads, in one-letter code: DnaJ homolog subfamily B member 8 (232 aa).

The 67-residue stretch at 3 to 69 (NYYEVLGVQA…KKRSLYDRAG (67 aa)) folds into the J domain.

Interacts with histone deacetylases HDAC4, HDAC6, and SIRT2, HDAC activity is required for antiaggregation.

Efficient suppressor of aggregation and toxicity of disease-associated polyglutamine proteins. This chain is DnaJ homolog subfamily B member 8 (DNAJB8), found in Homo sapiens (Human).